Here is a 625-residue protein sequence, read N- to C-terminus: Vicilin-like antimicrobial peptides 2-3 (625 aa).

Disordered regions lie at residues 120-152 (QQKR…QQRE) and 180-212 (RQHG…NPYY). Positions 198–212 (RYEEGEEKQSDNPYY) are enriched in basic and acidic residues. Cupin type-1 domains follow at residues 230-369 (SVLE…ERLR) and 414-584 (YNLF…KEVE). The segment at 594-614 (IFFPGPRQHQQQSPRSTKQQQ) is disordered. A compositionally biased stretch (low complexity) spans 601–614 (QHQQQSPRSTKQQQ).

This sequence belongs to the 7S seed storage protein family.

Its subcellular location is the secreted. Its function is as follows. Antimicrobial peptides 2b, 2c and 2d have antibacterial and antifungal activity against a range of species. This chain is Vicilin-like antimicrobial peptides 2-3, found in Macadamia integrifolia (Macadamia nut).